Consider the following 238-residue polypeptide: Lipoarabinomannan carrier protein LprG (238 aa).

The first 26 residues, 1–26 (MQAPKHHRRLFAVLATLNTATAVIAG), serve as a signal peptide directing secretion. The N-palmitoyl cysteine moiety is linked to residue Cys-27. Cys-27 carries the S-diacylglycerol cysteine lipid modification.

The protein belongs to the LppX/LprAFG lipoprotein family. In terms of processing, modified by Lgt on Cys-27 with an S-linked diacylglyceral, signal peptide is removed by LspA, Cys-27 is further modifed with a fatty acid on its amino group by Lnt yielding a triacylated protein. Probably glycosylated, which is required for T-cell activation.

It localises to the cell inner membrane. Its subcellular location is the secreted. The protein localises to the cell wall. Functionally, helps membrane protein ML0556 (P55) transport triacylglycerides (TAG) across the inner cell membrane into the periplasm and probably ultimately to the outer membrane. Binds TAG in its hydrophobic cavity and transfers it between lipid bilayers. TAG probably regulates lipid metabolism and growth regulation and plays a structural role in the outer membrane. Binds di- and triacylated phosphatidyl-myo-inositol mannosides (PIMs), and glycolipid lipoglycan modulins lipoarabinomannan (LAM) and lipomannan (LM), facilitating their recognition by TLR2. Required for activity of drug efflux transporter ML0556. Required, probably with ML0556, for normal surface localization of LAM. Its function is as follows. Constitutes a host TLR2 agonist (toll-like receptor) able to stimulate proliferation of CD4+ T-cells derived from a human leprosy patient following protein processing/presentation by MHC class II molecules in peripheral blood mononuclear cells. The protein is Lipoarabinomannan carrier protein LprG of Mycobacterium leprae (strain TN).